Consider the following 374-residue polypeptide: Alanine racemase (374 aa).

Lysine 34 (proton acceptor; specific for D-alanine) is an active-site residue. Lysine 34 bears the N6-(pyridoxal phosphate)lysine mark. Arginine 147 is a binding site for substrate. Tyrosine 271 serves as the catalytic Proton acceptor; specific for L-alanine. A substrate-binding site is contributed by methionine 319.

This sequence belongs to the alanine racemase family. Pyridoxal 5'-phosphate serves as cofactor.

It carries out the reaction L-alanine = D-alanine. Its pathway is amino-acid biosynthesis; D-alanine biosynthesis; D-alanine from L-alanine: step 1/1. Catalyzes the interconversion of L-alanine and D-alanine. May also act on other amino acids. This chain is Alanine racemase (alr), found in Actinobacillus pleuropneumoniae serotype 5b (strain L20).